The primary structure comprises 795 residues: Plakophilin-2 (795 aa).

Residues 1–318 are required for binding to single-stranded DNA; the sequence is MAVPGSLAEC…MTLERAVNML (318 aa). Phosphoserine is present on Ser-44. Arg-46 bears the Omega-N-methylarginine mark. A phosphoserine mark is found at Ser-82, Ser-132, Ser-135, Ser-151, Ser-154, Ser-155, Ser-172, Ser-188, and Ser-232. Disordered stretches follow at residues 197 to 233 and 245 to 274; these read GTAR…SHSA and SQAR…REPG. The segment covering 245 to 257 has biased composition (polar residues); that stretch reads SQARLQSTQSRTA. Residues 258 to 268 are compositionally biased toward low complexity; sequence RSSWPRSSVRS. Ser-265 and Ser-287 each carry phosphoserine. ARM repeat units lie at residues 299–339, 343–382, 385–425, 484–530, 585–625, 633–672, 677–718, and 721–763; these read DAQL…QHES, SEAR…NLVF, NDNK…NLSS, PDGR…NLSY, PHGI…NLTA, LVAR…NLSR, QNEI…NLMQ, and YQNA…SLWA.

It belongs to the beta-catenin family. Interacts with DSC2. Interacts with JUP. Interacts with KRT5/CK5, KRT8/CK8, KRT14/CK14, KRT18/CK18 and VIM. Interacts (via N-terminus) with MARK3/C-TAK1. Interacts with DSP. Interacts with DSG1, DSG2 and DSG3. Interacts (via N-terminus) with CTNNB1. Interacts with CDH1. Interacts with the RNA polymerase III (Pol III) complex proteins POLR3A/RPC155, POLR3F/RPC39 and POLR3C/RPC82. Interacts with CTNNA3. Interacts (via N-terminus) with SCN5A/Nav1.5. Interacts with ANK3/ANKG and GJA1/CX43. As to expression, expressed in cardiomyocytes in the heart (at protein level).

It localises to the nucleus. The protein resides in the cell junction. It is found in the desmosome. The protein localises to the cytoplasm. A component of desmosome cell-cell junctions which are required for positive regulation of cellular adhesion. Regulates focal adhesion turnover resulting in changes in focal adhesion size, cell adhesion and cell spreading, potentially via transcriptional modulation of beta-integrins. Required to maintain gingival epithelial barrier function. Important component of the desmosome that is also required for localization of desmosome component proteins such as DSC2, DSG2 and JUP to the desmosome cell-cell junction. Required for the formation of desmosome cell junctions in cardiomyocytes, thereby required for the correct formation of the heart, specifically trabeculation and formation of the atria walls. Loss of desmosome cell junctions leads to mis-localization of DSP and DSG2 resulting in disruption of cell-cell adhesion and disordered intermediate filaments. Modulates profibrotic gene expression in cardiomyocytes via regulation of DSP expression and subsequent activation of downstream TGFB1 and MAPK14/p38 MAPK signaling. Required for cardiac sodium current propagation and electrical synchrony in cardiac myocytes, via ANK3 stabilization and modulation of SCN5A/Nav1.5 localization to cell-cell junctions. Required for mitochondrial function, nuclear envelope integrity and positive regulation of SIRT3 transcription via maintaining DES localization at its nuclear envelope and cell tip anchoring points, and thereby preserving regulation of the transcriptional program. Maintenance of nuclear envelope integrity protects against DNA damage and transcriptional dysregulation of genes, especially those involved in the electron transport chain, thereby preserving mitochondrial function and protecting against superoxide radical anion generation. Binds single-stranded DNA (ssDNA). May regulate the localization of GJA1 to gap junctions in intercalated disks of the heart. This Mus musculus (Mouse) protein is Plakophilin-2.